A 260-amino-acid polypeptide reads, in one-letter code: Cobalt transport protein CbiM (260 aa).

The N-terminal stretch at Met-1–Ala-34 is a signal peptide. Helical transmembrane passes span Glu-39–Ile-59, Leu-77–Phe-97, Leu-109–Phe-129, Leu-132–Met-152, Ile-175–Gly-195, and Val-215–Phe-235.

It belongs to the CbiM family. As to quaternary structure, forms an energy-coupling factor (ECF) transporter complex composed of an ATP-binding protein (A component, CbiO), a transmembrane protein (T component, CbiQ) and 2 possible substrate-capture proteins (S components, CbiM and CbiN) of unknown stoichimetry.

The protein resides in the cell membrane. Its pathway is cofactor biosynthesis; adenosylcobalamin biosynthesis. In terms of biological role, part of the energy-coupling factor (ECF) transporter complex CbiMNOQ involved in cobalt import. The protein is Cobalt transport protein CbiM of Clostridium cellulovorans (strain ATCC 35296 / DSM 3052 / OCM 3 / 743B).